A 785-amino-acid polypeptide reads, in one-letter code: ATP-dependent 6-phosphofructokinase 1 (785 aa).

Positions 1-389 (MATTHAPAEP…YHFAYKNTAT (389 aa)) are N-terminal catalytic PFK domain 1. Residues glycine 23, 86 to 87 (RS), and 116 to 119 (GDGS) contribute to the ATP site. Aspartate 117 lines the Mg(2+) pocket. Residues 162 to 164 (SID), arginine 199, 206 to 208 (MGR), glutamate 263, arginine 291, and 297 to 300 (HTQR) contribute to the substrate site. Aspartate 164 serves as the catalytic Proton acceptor. An interdomain linker region spans residues 390–403 (PDHPKLILPENKRM). Residues 404 to 785 (RIAIIHVGAP…KTGWSCYENC (382 aa)) are C-terminal regulatory PFK domain 2. Residues arginine 480, 537–541 (TISNN), arginine 575, 582–584 (QGG), glutamate 642, arginine 668, 674–677 (HFQQ), and arginine 749 contribute to the beta-D-fructose 2,6-bisphosphate site.

The protein belongs to the phosphofructokinase type A (PFKA) family. ATP-dependent PFK group I subfamily. Eukaryotic two domain clade 'E' sub-subfamily. Homotetramer. Requires Mg(2+) as cofactor.

It is found in the cytoplasm. The catalysed reaction is beta-D-fructose 6-phosphate + ATP = beta-D-fructose 1,6-bisphosphate + ADP + H(+). The protein operates within carbohydrate degradation; glycolysis; D-glyceraldehyde 3-phosphate and glycerone phosphate from D-glucose: step 3/4. Allosterically activated by ADP, AMP, or fructose 2,6-bisphosphate, and allosterically inhibited by ATP or citrate. Functionally, catalyzes the phosphorylation of D-fructose 6-phosphate to fructose 1,6-bisphosphate by ATP, the first committing step of glycolysis. The chain is ATP-dependent 6-phosphofructokinase 1 (pfkA) from Aspergillus oryzae (strain ATCC 42149 / RIB 40) (Yellow koji mold).